The chain runs to 296 residues: MSYTKDNDKLYRYLFQNRAVRGEWVRLNDTFTETLNTHQYPKAVQNLLGEMLVATSLLTAIMKFEGTITVQIQGDGPLKLAVVNGNEKQQLRALARTQAEIADNASLSEMIGNGVLVISIMPNDGERYQGVIALDKPTIRECLEDYFIRSEQLQTHLVIRTGEYEGKAVAGGLLLQIMPDGTGMPEDFEHLMTLAETVKDEELFGLEAEELLFRLYHEEQVEVYPPQETEFYCGCSRERSGNAILLLPMEEIDEMLAEKNGVIDMQCECCGTQYFFDKNAIMEFKQEADKLNQLGL.

2 cysteine pairs are disulfide-bonded: C233/C235 and C267/C270.

Belongs to the HSP33 family. In terms of processing, under oxidizing conditions two disulfide bonds are formed involving the reactive cysteines. Under reducing conditions zinc is bound to the reactive cysteines and the protein is inactive.

Its subcellular location is the cytoplasm. Functionally, redox regulated molecular chaperone. Protects both thermally unfolding and oxidatively damaged proteins from irreversible aggregation. Plays an important role in the bacterial defense system toward oxidative stress. This Actinobacillus pleuropneumoniae serotype 7 (strain AP76) protein is 33 kDa chaperonin.